Here is a 65-residue protein sequence, read N- to C-terminus: Putative cytochrome c oxidase subunit 5C-4 (65 aa).

Residues 20-37 (EIIYGITLGFAVGGLWKM) form a helical membrane-spanning segment.

It belongs to the cytochrome c oxidase subunit 5C family.

It localises to the mitochondrion inner membrane. Functionally, this protein is one of the nuclear-coded polypeptide chains of cytochrome c oxidase, the terminal oxidase in mitochondrial electron transport. This chain is Putative cytochrome c oxidase subunit 5C-4, found in Arabidopsis thaliana (Mouse-ear cress).